An 812-amino-acid chain; its full sequence is Ras guanine nucleotide exchange factor J (812 aa).

Composition is skewed to low complexity over residues 1 to 36 and 53 to 65; these read MSNP…NSKS and LLNR…NLNN. The tract at residues 1 to 146 is disordered; sequence MSNPVSINNS…GGSSGGLNMS (146 aa). Polar residues predominate over residues 75–86; sequence SFTSNYQNIYTP. A compositionally biased stretch (low complexity) spans 87–101; that stretch reads NNNSYNSSNNNNNNN. Residues 131-141 show a composition bias toward gly residues; the sequence is NSGGGGGGSSG. A LisH domain is found at 214–246; that stretch reads GRDTMLQLILQHLQFEGLMDSRKLLEEEARVQY. The tract at residues 320-382 is disordered; sequence IIYVDDKEKE…NNSIGNSNSY (63 aa). Residues 323–343 show a composition bias toward basic and acidic residues; sequence VDDKEKEKEKEKEKEKEKDKF. Low complexity predominate over residues 344 to 382; that stretch reads GPNSTNSLSGSGSSPNIPSGMNNNSSSIGNNSIGNSNSY. The 127-residue stretch at 409–535 folds into the N-terminal Ras-GEF domain; it reads NKPQVKAASL…LSESLNAKIK (127 aa). Positions 573–804 constitute a Ras-GEF domain; the sequence is DEEEIARQLT…YSRSMSFEPR (232 aa).

Functionally, promotes the exchange of Ras-bound GDP by GTP. The protein is Ras guanine nucleotide exchange factor J (gefJ) of Dictyostelium discoideum (Social amoeba).